The following is a 1256-amino-acid chain: Putative protein DDB_G0292252 (1256 aa).

Disordered regions lie at residues methionine 1 to asparagine 53, leucine 145 to arginine 243, glutamate 898 to threonine 951, and serine 1069 to serine 1136. A compositionally biased stretch (low complexity) spans asparagine 147–glycine 214. Over residues glutamine 222–arginine 243 the composition is skewed to polar residues. 2 stretches are compositionally biased toward low complexity: residues glutamate 898–glutamate 916 and threonine 925–threonine 942. Positions serine 1069 to proline 1079 are enriched in polar residues. Residues serine 1080–serine 1136 show a composition bias toward low complexity.

The polypeptide is Putative protein DDB_G0292252 (Dictyostelium discoideum (Social amoeba)).